Reading from the N-terminus, the 88-residue chain is DDKELKKQLLRKYSGCLGNLRKELCKKRKKDKLPKEARQKLLSWWELHYRWPYPSEMEKIALAESTGLEQKQINNWFINQRKRHWKPS.

In terms of domain architecture, ELK spans 4-24 (ELKKQLLRKYSGCLGNLRKEL). Residues 25–88 (CKKRKKDKLP…NQRKRHWKPS (64 aa)) constitute a DNA-binding region (homeobox; TALE-type).

Belongs to the TALE/KNOX homeobox family. In terms of tissue distribution, strongly expressed in ear inflorescence primordia and shoot meristem. Weakly expressed in embryos. Absent from leaves.

The protein resides in the nucleus. Its function is as follows. Probably binds to the DNA sequence 5'-TGAC-3'. In Zea mays (Maize), this protein is Homeobox protein knotted-1-like 3 (KNOX3).